A 166-amino-acid polypeptide reads, in one-letter code: Podoplanin (166 aa).

Positions 1 to 22 (MWTAPVLLWVLGSVWFWDSAQG) are cleaved as a signal peptide. At 23 to 135 (GAIGALEDDL…KKDGLAVVTL (113 aa)) the chain is on the extracellular side. O-linked (GalNAc...) threonine glycans are attached at residues Thr34, Thr52, Thr55, and Thr56. Residues 54 to 63 (DTTGELDKST) show a composition bias toward basic and acidic residues. A disordered region spans residues 54–124 (DTTGELDKST…DNAGGETQTT (71 aa)). O-linked (GalNAc...) serine glycosylation is present at Ser62. Residues Thr63, Thr71, and Thr80 are each glycosylated (O-linked (GalNAc...) threonine). Ser81 is a glycosylation site (O-linked (GalNAc...) serine). A glycan (O-linked (GalNAc...) threonine) is linked at Thr83. Ser84 carries an O-linked (GalNAc...) serine glycan. The segment covering 84-93 (SDHDHKEHES) has biased composition (basic and acidic residues). O-linked (GalNAc...) threonine glycosylation is found at Thr94, Thr95, Thr96, Thr101, Thr105, Thr109, and Thr110. Positions 94–103 (TTTVKAVTSH) are enriched in polar residues. The segment covering 104–114 (STDKKTTHPNR) has biased composition (basic and acidic residues). A helical transmembrane segment spans residues 136–156 (VGIIIGVLLAIGFIGGIIIVV). The requires for dimerization and lipid rafts association stretch occupies residues 137–141 (GIIIG). The Cytoplasmic portion of the chain corresponds to 157–166 (MRKISGRFSP). The segment at 158-159 (RK) is requires for interaction with MSN and EZR.

It belongs to the podoplanin family. Homodimer. Interacts with CLEC1B; the interaction is independent of CLEC1B glycosylation and activates CLEC1B; the interaction is dependent of sialic acid on O-glycans. Interacts with CD9; this interaction is homophilic and attenuates platelet aggregation and pulmonary metastasis induced by PDPN. Interacts with LGALS8; the interaction is glycosylation-dependent; may participate in connection of the lymphatic endothelium to the surrounding extracellular matrix. Interacts with HSPA9. Interacts (via extracellular domain) with CD44; this interaction is required for PDPN-mediated directional migration and regulation of lamellipodia extension/stabilization during cell spreading and migration. Interacts (via cytoplasmic domain) with MSN and EZR; activates RHOA and promotes epithelial-mesenchymal transition. Interacts with CCL21; relocalized PDPN to the basolateral membrane. In terms of processing, extensively O-glycosylated. Contains sialic acid residues. O-glycosylation is necessary for platelet aggregation activity. Disialylated at Thr-52; sialic acid is critical for platelet-aggregating activity and for CLEC1B interaction. Post-translationally, the N-terminus is blocked. In adult kidney, expressed on the urinary surface and foot processes of podocytes and in parietal epithelial cells of Bowman's capsule where it is localized to luminal surfaces. In lung, expressed exclusively on luminal surfaces of type I alveolar epithelial cells and pleural mesothelial cells. Not expressed in type II alveolar cells. In bone, expressed in osteocytes and osteoblasts. In spleen, liver, stomach and intestine, expressed in mesoepithelium. Also expressed in thymic epithelial cells, choroid plexus and leptomeninges.

It is found in the membrane. The protein localises to the cell projection. It localises to the lamellipodium membrane. The protein resides in the filopodium membrane. Its subcellular location is the microvillus membrane. It is found in the ruffle membrane. The protein localises to the membrane raft. It localises to the apical cell membrane. The protein resides in the basolateral cell membrane. Its subcellular location is the invadopodium. Functionally, mediates effects on cell migration and adhesion through its different partners. During development plays a role in blood and lymphatic vessels separation by binding CLEC1B, triggering CLEC1B activation in platelets and leading to platelet activation and/or aggregation. Interaction with CD9, on the contrary, attenuates platelet aggregation and pulmonary metastasis induced by PDPN. Mediates effects on cell migration and adhesion through its different partners. Through MSN or EZR interaction promotes epithelial-mesenchymal transition (EMT) leading to ERZ phosphorylation and triggering RHOA activation leading to cell migration increase and invasiveness. Interaction with CD44 promotes directional cell migration in epithelial and tumor cells. In lymph nodes (LNs), controls fibroblastic reticular cells (FRCs) adhesion to the extracellular matrix (ECM) and contraction of the actomyosin by maintaining ERM proteins (EZR; MSN and RDX) and MYL9 activation through association with unknown transmembrane proteins. Engagement of CLEC1B by PDPN promotes FRCs relaxation by blocking lateral membrane interactions leading to reduction of ERM proteins (EZR; MSN and RDX) and MYL9 activation. Through binding with LGALS8 may participate in connection of the lymphatic endothelium to the surrounding extracellular matrix. In keratinocytes, induces changes in cell morphology showing an elongated shape, numerous membrane protrusions, major reorganization of the actin cytoskeleton, increased motility and decreased cell adhesion. Controls invadopodia stability and maturation leading to efficient degradation of the extracellular matrix (ECM) in tumor cells through modulation of RHOC activity in order to activate ROCK1/ROCK2 and LIMK1/LIMK2 and inactivation of CFL1. Required for normal lung cell proliferation and alveolus formation at birth. Does not function as a water channel or as a regulator of aquaporin-type water channels. Does not have any effect on folic acid or amino acid transport. The polypeptide is Podoplanin (Rattus norvegicus (Rat)).